We begin with the raw amino-acid sequence, 181 residues long: Adenylyl-sulfate kinase (181 aa).

12–19 contacts ATP; that stretch reads GLSGAGKT. The active-site Phosphoserine intermediate is the serine 86.

Belongs to the APS kinase family.

It carries out the reaction adenosine 5'-phosphosulfate + ATP = 3'-phosphoadenylyl sulfate + ADP + H(+). Its pathway is sulfur metabolism; hydrogen sulfide biosynthesis; sulfite from sulfate: step 2/3. Functionally, catalyzes the synthesis of activated sulfate. This chain is Adenylyl-sulfate kinase, found in Rippkaea orientalis (strain PCC 8801 / RF-1) (Cyanothece sp. (strain PCC 8801)).